Reading from the N-terminus, the 238-residue chain is Small ribosomal subunit protein uS2c (238 aa).

This sequence belongs to the universal ribosomal protein uS2 family.

It localises to the plastid. Its subcellular location is the chloroplast. This is Small ribosomal subunit protein uS2c (rps2) from Jasminum nudiflorum (Winter jasmine).